A 298-amino-acid chain; its full sequence is Aspartate carbamoyltransferase catalytic subunit (298 aa).

The carbamoyl phosphate site is built by arginine 50 and threonine 51. Residue lysine 79 coordinates L-aspartate. The carbamoyl phosphate site is built by arginine 100, histidine 128, and glutamine 131. 2 residues coordinate L-aspartate: arginine 161 and arginine 220. Carbamoyl phosphate is bound by residues leucine 259 and proline 260.

Belongs to the aspartate/ornithine carbamoyltransferase superfamily. ATCase family. In terms of assembly, heterooligomer of catalytic and regulatory chains.

It catalyses the reaction carbamoyl phosphate + L-aspartate = N-carbamoyl-L-aspartate + phosphate + H(+). The protein operates within pyrimidine metabolism; UMP biosynthesis via de novo pathway; (S)-dihydroorotate from bicarbonate: step 2/3. Functionally, catalyzes the condensation of carbamoyl phosphate and aspartate to form carbamoyl aspartate and inorganic phosphate, the committed step in the de novo pyrimidine nucleotide biosynthesis pathway. The protein is Aspartate carbamoyltransferase catalytic subunit of Sulfurisphaera tokodaii (strain DSM 16993 / JCM 10545 / NBRC 100140 / 7) (Sulfolobus tokodaii).